The following is a 168-amino-acid chain: uncharacterized protein (168 aa).

The chain crosses the membrane as a helical span at residues 5–24; the sequence is IAWASACLLLVMLTGFFTIG.

It localises to the membrane. This is an uncharacterized protein from Bacillus subtilis (strain 168).